The chain runs to 661 residues: Heme transporter BhuA (661 aa).

Residues 1-23 form the signal peptide; it reads MKFTRTLVLASTSLLATVATSQA. In terms of domain architecture, TBDR plug spans 48 to 159; that stretch reads KDNIEATGGT…AAGAIRYETV (112 aa). Residues 170 to 661 enclose the TBDR beta-barrel domain; the sequence is TFGARIIGSY…TFTFQTAFKF (492 aa).

Belongs to the TonB-dependent receptor family.

The protein localises to the cell outer membrane. In terms of biological role, heme transporter. The chain is Heme transporter BhuA (bhuA) from Brucella abortus biovar 1 (strain 9-941).